The following is a 932-amino-acid chain: Glycine dehydrogenase (decarboxylating) (932 aa).

An N6-(pyridoxal phosphate)lysine modification is found at Lys-685.

The protein belongs to the GcvP family. In terms of assembly, the glycine cleavage system is composed of four proteins: P, T, L and H. The cofactor is pyridoxal 5'-phosphate.

The catalysed reaction is N(6)-[(R)-lipoyl]-L-lysyl-[glycine-cleavage complex H protein] + glycine + H(+) = N(6)-[(R)-S(8)-aminomethyldihydrolipoyl]-L-lysyl-[glycine-cleavage complex H protein] + CO2. In terms of biological role, the glycine cleavage system catalyzes the degradation of glycine. The P protein binds the alpha-amino group of glycine through its pyridoxal phosphate cofactor; CO(2) is released and the remaining methylamine moiety is then transferred to the lipoamide cofactor of the H protein. This Brucella melitensis biotype 1 (strain ATCC 23456 / CCUG 17765 / NCTC 10094 / 16M) protein is Glycine dehydrogenase (decarboxylating).